A 148-amino-acid chain; its full sequence is Transcriptional regulator MraZ (148 aa).

2 consecutive SpoVT-AbrB domains span residues 5-51 (STQL…PQPV) and 80-123 (ACDV…DMAK).

It belongs to the MraZ family. In terms of assembly, forms oligomers.

It is found in the cytoplasm. It localises to the nucleoid. This is Transcriptional regulator MraZ from Nitrosomonas eutropha (strain DSM 101675 / C91 / Nm57).